Consider the following 351-residue polypeptide: Heat-inducible transcription repressor HrcA (351 aa).

Belongs to the HrcA family.

Functionally, negative regulator of class I heat shock genes (grpE-dnaK-dnaJ and groELS operons). Prevents heat-shock induction of these operons. The polypeptide is Heat-inducible transcription repressor HrcA (Mycoplasma pneumoniae (strain ATCC 29342 / M129 / Subtype 1) (Mycoplasmoides pneumoniae)).